A 264-amino-acid chain; its full sequence is S-adenosylmethionine decarboxylase proenzyme (264 aa).

Catalysis depends on S112, which acts as the Schiff-base intermediate with substrate; via pyruvic acid. S112 carries the post-translational modification Pyruvic acid (Ser); by autocatalysis. The active-site Proton acceptor; for processing activity is H117. C140 acts as the Proton donor; for catalytic activity in catalysis.

This sequence belongs to the prokaryotic AdoMetDC family. Type 2 subfamily. In terms of assembly, heterooctamer of four alpha and four beta chains arranged as a tetramer of alpha/beta heterodimers. Pyruvate serves as cofactor. In terms of processing, is synthesized initially as an inactive proenzyme. Formation of the active enzyme involves a self-maturation process in which the active site pyruvoyl group is generated from an internal serine residue via an autocatalytic post-translational modification. Two non-identical subunits are generated from the proenzyme in this reaction, and the pyruvate is formed at the N-terminus of the alpha chain, which is derived from the carboxyl end of the proenzyme. The post-translation cleavage follows an unusual pathway, termed non-hydrolytic serinolysis, in which the side chain hydroxyl group of the serine supplies its oxygen atom to form the C-terminus of the beta chain, while the remainder of the serine residue undergoes an oxidative deamination to produce ammonia and the pyruvoyl group blocking the N-terminus of the alpha chain.

It catalyses the reaction S-adenosyl-L-methionine + H(+) = S-adenosyl 3-(methylsulfanyl)propylamine + CO2. It participates in amine and polyamine biosynthesis; S-adenosylmethioninamine biosynthesis; S-adenosylmethioninamine from S-adenosyl-L-methionine: step 1/1. Its function is as follows. Catalyzes the decarboxylation of S-adenosylmethionine to S-adenosylmethioninamine (dcAdoMet), the propylamine donor required for the synthesis of the polyamines spermine and spermidine from the diamine putrescine. This Sodalis glossinidius (strain morsitans) protein is S-adenosylmethionine decarboxylase proenzyme.